The following is a 188-amino-acid chain: Guanylate kinase (188 aa).

Residues Gly8 to Arg188 enclose the Guanylate kinase-like domain. Gly15–Ser22 is an ATP binding site.

It belongs to the guanylate kinase family.

It localises to the cytoplasm. The catalysed reaction is GMP + ATP = GDP + ADP. In terms of biological role, essential for recycling GMP and indirectly, cGMP. This Corynebacterium jeikeium (strain K411) protein is Guanylate kinase.